Consider the following 282-residue polypeptide: Formamidopyrimidine-DNA glycosylase (282 aa).

P2 acts as the Schiff-base intermediate with DNA in catalysis. E3 functions as the Proton donor in the catalytic mechanism. K60 (proton donor; for beta-elimination activity) is an active-site residue. Residues H99, R118, and K163 each contribute to the DNA site. An FPG-type zinc finger spans residues 248 to 282 (WVYRRSGKNCKKCGEKILREKICGRSTHWCPNCQK). The Proton donor; for delta-elimination activity role is filled by R272.

The protein belongs to the FPG family. As to quaternary structure, monomer. Requires Zn(2+) as cofactor.

The catalysed reaction is Hydrolysis of DNA containing ring-opened 7-methylguanine residues, releasing 2,6-diamino-4-hydroxy-5-(N-methyl)formamidopyrimidine.. It carries out the reaction 2'-deoxyribonucleotide-(2'-deoxyribose 5'-phosphate)-2'-deoxyribonucleotide-DNA = a 3'-end 2'-deoxyribonucleotide-(2,3-dehydro-2,3-deoxyribose 5'-phosphate)-DNA + a 5'-end 5'-phospho-2'-deoxyribonucleoside-DNA + H(+). Functionally, involved in base excision repair of DNA damaged by oxidation or by mutagenic agents. Acts as a DNA glycosylase that recognizes and removes damaged bases. Has a preference for oxidized purines, such as 7,8-dihydro-8-oxoguanine (8-oxoG). Has AP (apurinic/apyrimidinic) lyase activity and introduces nicks in the DNA strand. Cleaves the DNA backbone by beta-delta elimination to generate a single-strand break at the site of the removed base with both 3'- and 5'-phosphates. This Prochlorococcus marinus (strain NATL2A) protein is Formamidopyrimidine-DNA glycosylase.